A 47-amino-acid polypeptide reads, in one-letter code: Photosystem II reaction center protein K (47 aa).

Positions Met1 to Ala10 are excised as a propeptide. Residues Phe19 to Val39 form a helical membrane-spanning segment.

Belongs to the PsbK family. In terms of assembly, PSII is composed of 1 copy each of membrane proteins PsbA, PsbB, PsbC, PsbD, PsbE, PsbF, PsbH, PsbI, PsbJ, PsbK, PsbL, PsbM, PsbT, PsbX, PsbY, PsbZ, Psb30/Ycf12, peripheral proteins PsbO, CyanoQ (PsbQ), PsbU, PsbV and a large number of cofactors. It forms dimeric complexes.

Its subcellular location is the cellular thylakoid membrane. In terms of biological role, one of the components of the core complex of photosystem II (PSII). PSII is a light-driven water:plastoquinone oxidoreductase that uses light energy to abstract electrons from H(2)O, generating O(2) and a proton gradient subsequently used for ATP formation. It consists of a core antenna complex that captures photons, and an electron transfer chain that converts photonic excitation into a charge separation. This Synechococcus sp. (strain CC9311) protein is Photosystem II reaction center protein K.